The sequence spans 218 residues: Large ribosomal subunit protein bL25 (218 aa).

It belongs to the bacterial ribosomal protein bL25 family. CTC subfamily. In terms of assembly, part of the 50S ribosomal subunit; part of the 5S rRNA/L5/L18/L25 subcomplex. Contacts the 5S rRNA. Binds to the 5S rRNA independently of L5 and L18.

In terms of biological role, this is one of the proteins that binds to the 5S RNA in the ribosome where it forms part of the central protuberance. The protein is Large ribosomal subunit protein bL25 of Gluconobacter oxydans (strain 621H) (Gluconobacter suboxydans).